The following is a 92-amino-acid chain: Putative pterin-4-alpha-carbinolamine dehydratase (92 aa).

Belongs to the pterin-4-alpha-carbinolamine dehydratase family.

It carries out the reaction (4aS,6R)-4a-hydroxy-L-erythro-5,6,7,8-tetrahydrobiopterin = (6R)-L-erythro-6,7-dihydrobiopterin + H2O. This is Putative pterin-4-alpha-carbinolamine dehydratase from Cereibacter sphaeroides (strain ATCC 17023 / DSM 158 / JCM 6121 / CCUG 31486 / LMG 2827 / NBRC 12203 / NCIMB 8253 / ATH 2.4.1.) (Rhodobacter sphaeroides).